A 358-amino-acid chain; its full sequence is Holliday junction branch migration complex subunit RuvB (358 aa).

Residues 1 to 183 (MAEPSLVSGG…FGFTGHLEFY (183 aa)) form a large ATPase domain (RuvB-L) region. Residues L22, R23, G64, K67, T68, T69, 130-132 (EDF), R173, Y183, and R220 contribute to the ATP site. Mg(2+) is bound at residue T68. Positions 184–254 (SVAELELVLR…SASAALDMYE (71 aa)) are small ATPAse domain (RuvB-S). The tract at residues 257 to 358 (ERGLDRLDRS…NHAESVDTVG (102 aa)) is head domain (RuvB-H). Residues R312 and R317 each contribute to the DNA site.

It belongs to the RuvB family. As to quaternary structure, homohexamer. Forms an RuvA(8)-RuvB(12)-Holliday junction (HJ) complex. HJ DNA is sandwiched between 2 RuvA tetramers; dsDNA enters through RuvA and exits via RuvB. An RuvB hexamer assembles on each DNA strand where it exits the tetramer. Each RuvB hexamer is contacted by two RuvA subunits (via domain III) on 2 adjacent RuvB subunits; this complex drives branch migration. In the full resolvosome a probable DNA-RuvA(4)-RuvB(12)-RuvC(2) complex forms which resolves the HJ.

It localises to the cytoplasm. The catalysed reaction is ATP + H2O = ADP + phosphate + H(+). The RuvA-RuvB-RuvC complex processes Holliday junction (HJ) DNA during genetic recombination and DNA repair, while the RuvA-RuvB complex plays an important role in the rescue of blocked DNA replication forks via replication fork reversal (RFR). RuvA specifically binds to HJ cruciform DNA, conferring on it an open structure. The RuvB hexamer acts as an ATP-dependent pump, pulling dsDNA into and through the RuvAB complex. RuvB forms 2 homohexamers on either side of HJ DNA bound by 1 or 2 RuvA tetramers; 4 subunits per hexamer contact DNA at a time. Coordinated motions by a converter formed by DNA-disengaged RuvB subunits stimulates ATP hydrolysis and nucleotide exchange. Immobilization of the converter enables RuvB to convert the ATP-contained energy into a lever motion, pulling 2 nucleotides of DNA out of the RuvA tetramer per ATP hydrolyzed, thus driving DNA branch migration. The RuvB motors rotate together with the DNA substrate, which together with the progressing nucleotide cycle form the mechanistic basis for DNA recombination by continuous HJ branch migration. Branch migration allows RuvC to scan DNA until it finds its consensus sequence, where it cleaves and resolves cruciform DNA. The protein is Holliday junction branch migration complex subunit RuvB of Paenarthrobacter aurescens (strain TC1).